The following is a 525-amino-acid chain: Phospho-2-dehydro-3-deoxyheptonate aldolase 1, chloroplastic (525 aa).

Polar residues predominate over residues 1–13 (MALSNASSLSTRS). A disordered region spans residues 1–35 (MALSNASSLSTRSIYGGDLSHRPSNRQSSFTFHPA). Residues 1–52 (MALSNASSLSTRSIYGGDLSHRPSNRQSSFTFHPAVNTKPKSVNLVTAVHAA) constitute a chloroplast transit peptide.

The protein belongs to the class-II DAHP synthase family.

It localises to the plastid. The protein resides in the chloroplast. It carries out the reaction D-erythrose 4-phosphate + phosphoenolpyruvate + H2O = 7-phospho-2-dehydro-3-deoxy-D-arabino-heptonate + phosphate. It participates in metabolic intermediate biosynthesis; chorismate biosynthesis; chorismate from D-erythrose 4-phosphate and phosphoenolpyruvate: step 1/7. This chain is Phospho-2-dehydro-3-deoxyheptonate aldolase 1, chloroplastic (DHS1), found in Arabidopsis thaliana (Mouse-ear cress).